We begin with the raw amino-acid sequence, 410 residues long: MDREDILKEFCNRNNIDVSQGRFFLESTNWNYELATALLHEVIPPEEDHGLQPSSDVSKVPEVTGSSSGISGGDQQPPRPLQRQQNTQGQGMKSGTASKKFATLRDLEGNDESAEEKSHLFTGGEKSGLSVEDGDPDPKKQLVRDILEKARQHTISPLDEQDSGPSSLASSWASVGQRLGTENEASGSTTPVTQSGPPRENPPTESQPEKPLRRTLYFWRNGFSVDDGPIYTYDDPANQEMLRYINSGRAPLHLLGVSMNQPIDVVVQHRMDEDYVAPFKPFSGKGQRLGSTYMQPRMSQMPGGLYTDTSTSSSVPINVKPNSTTPHASLQIDENKPTTRIQVRLSNGGRTVLTVNLSHTLHDIYEAVRAVSPGNFILSVPFPAKTLEDDPSVTVEAASLKNASLVQKSL.

2 disordered regions span residues 46–139 and 154–212; these read EEDH…PDPK and TISP…EKPL. Over residues 65-85 the composition is skewed to low complexity; it reads GSSSGISGGDQQPPRPLQRQQ. Positions 86-97 are enriched in polar residues; it reads NTQGQGMKSGTA. Phosphoserine is present on residues S156, S167, and S186. Low complexity predominate over residues 163-174; that stretch reads SGPSSLASSWAS. Positions 183-196 are enriched in polar residues; it reads NEASGSTTPVTQSG. T190 is modified (phosphothreonine). The SEP domain occupies 211 to 276; the sequence is PLRRTLYFWR…VQHRMDEDYV (66 aa). The UBX domain occupies 334–410; sequence ENKPTTRIQV…KNASLVQKSL (77 aa).

In terms of assembly, interacts with cdc48.

Functionally, involved in CDC48-dependent protein degradation through the ubiquitin/proteasome pathway. Involved in delivery of substrates to the 26S proteasome. Also required for membrane fusion and sporulation. The chain is UBX domain-containing protein 3 (ubx3) from Schizosaccharomyces pombe (strain 972 / ATCC 24843) (Fission yeast).